Here is a 552-residue protein sequence, read N- to C-terminus: Capsid protein precursor (552 aa).

The interval 1–41 (MKQNDTKKTTQRRNSKKYSSKTNRGTKRAPRDQEVGTGAQE) is disordered. Residues 9-28 (TTQRRNSKKYSSKTNRGTKR) are compositionally biased toward basic residues.

As to quaternary structure, homodimer. Post-translationally, the 7 kDa polypeptide is acetylated. In terms of processing, autocatalytic proteolysis releases a post-translationally modified peptide that remains associated with nucleic acid within the virion. This peptide is observed only when nucleic acid is packaged in the capsid.

The protein localises to the virion. Functionally, the capsid protein self-assembles to form an icosahedral capsid with a T=2 symmetry made of 120 subunits. This is Capsid protein precursor (Segment-1) from Human picobirnavirus (strain Human/Thailand/Hy005102/-) (PBV).